A 207-amino-acid polypeptide reads, in one-letter code: Ribosomal RNA small subunit methyltransferase G (207 aa).

Residues Gly-74, Leu-79, 125 to 126 (VE), and Arg-140 each bind S-adenosyl-L-methionine.

The protein belongs to the methyltransferase superfamily. RNA methyltransferase RsmG family.

It localises to the cytoplasm. The catalysed reaction is guanosine(527) in 16S rRNA + S-adenosyl-L-methionine = N(7)-methylguanosine(527) in 16S rRNA + S-adenosyl-L-homocysteine. In terms of biological role, specifically methylates the N7 position of guanine in position 527 of 16S rRNA. This is Ribosomal RNA small subunit methyltransferase G from Shewanella pealeana (strain ATCC 700345 / ANG-SQ1).